We begin with the raw amino-acid sequence, 66 residues long: Alpha-conotoxin Vc1a (66 aa).

Positions 1-25 (MGMRMMFTVFLLVVLATTVVSSTSG) are cleaved as a signal peptide. Residues 26–47 (RREFRGRNAAAKASDLVSLTDK) constitute a propeptide that is removed on maturation. Disulfide bonds link Cys51/Cys57 and Cys52/Cys65. The segment at 53–55 (SDP) is ser-Xaa-Pro motif, crucial for potent interaction with nAChR. Key region for inhibition of alpha-9-alpha-10/CHRNA9-CHRNA10 nAChR stretches follow at residues 54–56 (DPR) and 60–64 (DHPEI). Residue Pro55 is modified to 4-hydroxyproline. 4-carboxyglutamate is present on Glu63. The residue at position 65 (Cys65) is a Cysteine amide.

It belongs to the conotoxin A superfamily. Post-translationally, vc1.1 is described as having no post-translational modifications (except C-terminal amidation), whereas Vc1a contains a hydroxyproline at Pro-55 and a 4-carboxyglutamate at Glu-63 (and a C-terminal amidation). Hydroxylation of Pro-55 is not important for inhibition of alpha-9-alpha-10/CHRNA9-CHRNA10 nAChRs, since [P6O]Vc1.1 (Pro-55 hydroxylated) shows similar inhibition than native toxin (IC(50)=99.1 nM). In contrast, hydroxylation of Pro-55 seems to impair inhibition of HVA calcium channel currents, since [P6O]Vc1.1 has no effect on HVA calcium channel currents. In vivo, hydroxylation of Pro-55 seems to induce the loss of analgesic effects in rat models of neuropathic pain, since [P6O]Vc1.1 has no effect on mechanical allodynia. In terms of processing, gamma-carboxylation of Glu-63 is not important for inhibition of alpha-9-alpha-10/CHRNA9-CHRNA10 nAChRs, since [E14gamma]Vc1.1 (carboxyglutamate at Glu-63) shows similar inhibition than native toxin (IC(50)=65.3 nM). In contrast, gamma-carboxylation of Glu-63 seems to impair inhibition of HVA calcium channel currents, since [E14gamma]Vc1.1 has no effect on HVA calcium channel currents. Post-translationally, non-native isomers 'ribbon' (with disulfide connectivity C1-C4; C2-C3) and 'beads' (with disulfide connectivity C1-C2; C3-C4) of Vc1.1 also inhibit HVA calcium channel currents in rat DRG neurons (20-30% inhibition at 1 uM toxin). It has been shown that both reduced and alkylated Vc1.1 have no effect on HVA calcium channel currents. The observed activity can be attributed to specific isomers. [C3S]Vc1.1(1-8) mutant is C-terminally amidated. In terms of tissue distribution, expressed by the venom duct.

The protein localises to the secreted. Alpha-conotoxins act on postsynaptic membranes, they bind to the nicotinic acetylcholine receptors (nAChR) and thus inhibit them. This toxin (native toxin Vc1a; hydroxylated and gamma-carboxylated) blocks alpha-9-alpha-10/CHRNA9-CHRNA10 nAChRs (IC(50)=62.9 nM). In contrast to the non-post-translationally modified analog Vc1.1, Vc1a does not inhibit high voltage-activated (HVA) calcium channel currents. In vivo, in contrast to Vc1.1, Vc1a does not show analgesic effects in rat models of neuropathic pain. In terms of biological role, the synthetic peptide Vc1.1 (a non-hydroxylated and non-gamma-carboxylated analog of Vc1a) has two types of targets. It blocks alpha-9-alpha-10/CHRNA9-CHRNA10 nAChRs (on rat receptors, IC(50)=19-109 nM) (with preference for rat over human receptors) and inhibits high voltage-activated (HVA) calcium channel (Cav2.2, Cav2.3) currents by acting on GABA(B) receptors (GABBR1 and GABBR2) (IC(50)=1.7 nM). It also shows moderate inhibition on alpha-6/alpha-3-beta-2-beta-3 (CHRNA6/CHRNA3-CHRNB2-CHRNB3) (IC(50)=140 nM) and alpha-6/alpha-3-beta-4 (CHRNA6/CHRNA3-CHRNB4) (IC(50)=980 nM). On alpha-9-alpha-10/CHRNA9-CHRNA10 nAChR, it most likely interacts with the alpha-10(+)/alpha-9(-)interface of the receptor. In vivo, it acts as a powerful analgesic in rat models of neuropathic pain. This is Alpha-conotoxin Vc1a from Conus victoriae (Queen Victoria cone).